The following is a 187-amino-acid chain: Elongation factor P (187 aa).

It belongs to the elongation factor P family.

Its subcellular location is the cytoplasm. It functions in the pathway protein biosynthesis; polypeptide chain elongation. In terms of biological role, involved in peptide bond synthesis. Stimulates efficient translation and peptide-bond synthesis on native or reconstituted 70S ribosomes in vitro. Probably functions indirectly by altering the affinity of the ribosome for aminoacyl-tRNA, thus increasing their reactivity as acceptors for peptidyl transferase. The sequence is that of Elongation factor P from Thermodesulfovibrio yellowstonii (strain ATCC 51303 / DSM 11347 / YP87).